Reading from the N-terminus, the 581-residue chain is A-type ATP synthase subunit A (581 aa).

Position 232 to 239 (232 to 239 (GPFGSGKT)) interacts with ATP.

This sequence belongs to the ATPase alpha/beta chains family. As to quaternary structure, has multiple subunits with at least A(3), B(3), C, D, E, F, H, I and proteolipid K(x).

It is found in the cell membrane. It carries out the reaction ATP + H2O + 4 H(+)(in) = ADP + phosphate + 5 H(+)(out). Its function is as follows. Component of the A-type ATP synthase that produces ATP from ADP in the presence of a proton gradient across the membrane. The A chain is the catalytic subunit. The sequence is that of A-type ATP synthase subunit A from Methanocorpusculum labreanum (strain ATCC 43576 / DSM 4855 / Z).